The primary structure comprises 242 residues: Ras-like protein family member 11A (242 aa).

Positions 17–241 (ESSSDYLLPK…SPKVKAPSAL (225 aa)) are small GTPase-like. Residues 34–41 (GAGRVGKS), 81–85 (DTPGG), and 147–150 (NKGD) each bind GTP.

The protein belongs to the small GTPase superfamily. Ras family. As to quaternary structure, interacts with UBF/UBTF. As to expression, widely expressed. Down-regulated in prostate tumors compared to normal prostate tissue. High levels found in colon tumor and normal colon tissue followed by small intestine, liver, jejunum, ileum, bladder and aorta. Lowest levels observed in endothelial cells.

It is found in the nucleus. Its subcellular location is the nucleolus. The catalysed reaction is GTP + H2O = GDP + phosphate + H(+). Its function is as follows. Regulator of rDNA transcription. Acts in cooperation UBF/UBTF and positively regulates RNA polymerase I transcription. This Homo sapiens (Human) protein is Ras-like protein family member 11A.